Consider the following 395-residue polypeptide: GTPase Obg (395 aa).

Positions 1–159 constitute an Obg domain; that stretch reads MQFVDEASII…RNLRFEMKVM (159 aa). Residues 128 to 147 are disordered; the sequence is IHFKSSTNRAPRKTTPGTEG. The OBG-type G domain occupies 160–333; the sequence is ADVGLLGVPN…LVQAAHRWLT (174 aa). Residues 166 to 173, 191 to 195, 213 to 216, 283 to 286, and 314 to 316 contribute to the GTP site; these read GVPNAGKS, FTTLV, DVPG, NKLD, and SAI. Positions 173 and 193 each coordinate Mg(2+). Basic and acidic residues predominate over residues 340–368; sequence AEDETAFEHEREMRRRMEDEAVARAEARM. The interval 340 to 395 is disordered; the sequence is AEDETAFEHEREMRRRMEDEAVARAEARMSRKRKPAEDDDDDFDEDDYDVEVEYAP. Over residues 376–395 the composition is skewed to acidic residues; it reads EDDDDDFDEDDYDVEVEYAP.

Belongs to the TRAFAC class OBG-HflX-like GTPase superfamily. OBG GTPase family. In terms of assembly, monomer. It depends on Mg(2+) as a cofactor.

It localises to the cytoplasm. Its function is as follows. An essential GTPase which binds GTP, GDP and possibly (p)ppGpp with moderate affinity, with high nucleotide exchange rates and a fairly low GTP hydrolysis rate. Plays a role in control of the cell cycle, stress response, ribosome biogenesis and in those bacteria that undergo differentiation, in morphogenesis control. The polypeptide is GTPase Obg (Chromohalobacter salexigens (strain ATCC BAA-138 / DSM 3043 / CIP 106854 / NCIMB 13768 / 1H11)).